The following is a 287-amino-acid chain: 4-diphosphocytidyl-2-C-methyl-D-erythritol kinase (287 aa).

Residue Lys12 is part of the active site. 95 to 105 contributes to the ATP binding site; it reads PAQAGMGGGSS. Asp137 is a catalytic residue.

The protein belongs to the GHMP kinase family. IspE subfamily.

The enzyme catalyses 4-CDP-2-C-methyl-D-erythritol + ATP = 4-CDP-2-C-methyl-D-erythritol 2-phosphate + ADP + H(+). It functions in the pathway isoprenoid biosynthesis; isopentenyl diphosphate biosynthesis via DXP pathway; isopentenyl diphosphate from 1-deoxy-D-xylulose 5-phosphate: step 3/6. Functionally, catalyzes the phosphorylation of the position 2 hydroxy group of 4-diphosphocytidyl-2C-methyl-D-erythritol. The sequence is that of 4-diphosphocytidyl-2-C-methyl-D-erythritol kinase from Delftia acidovorans (strain DSM 14801 / SPH-1).